The following is a 168-amino-acid chain: Disulfide bond formation protein B 1 (168 aa).

Topologically, residues 1–14 (MNELTSRLNRERRF) are cytoplasmic. A helical transmembrane segment spans residues 15–31 (LVLLGVICLALIGGALY). Topologically, residues 32-49 (MQVVLGEAPCPLCILQRY) are periplasmic. The cysteines at positions 41 and 44 are disulfide-linked. The chain crosses the membrane as a helical span at residues 50–65 (ALLFIAIFAFIAAAMP). Topologically, residues 66–72 (GRKSLTF) are cytoplasmic. A helical transmembrane segment spans residues 73–89 (FEVLVVLSAIGGIVAAG). Over 90–144 (NHVYILANPMVSCGIDTLQPIVDDLPLAKLWPLAFQVDGFCSTPYPPILGLSLAQ) the chain is Periplasmic. Residues Cys-102 and Cys-130 are joined by a disulfide bond. Residues 145 to 163 (WALVAFVLTTVLVPLGIYR) form a helical membrane-spanning segment. Topologically, residues 164–168 (NRRRG) are cytoplasmic.

It belongs to the DsbB family.

It is found in the cell inner membrane. In terms of biological role, required for disulfide bond formation in some periplasmic proteins. Acts by oxidizing the DsbA protein. This Pseudomonas entomophila (strain L48) protein is Disulfide bond formation protein B 1.